Here is a 704-residue protein sequence, read N- to C-terminus: Fibulin-1 (704 aa).

Positions 1 to 25 (MDKLRGARPLRLLLLLLALLPALRG) are cleaved as a signal peptide. 35 disulfides stabilise this stretch: Cys33/Cys59, Cys34/Cys66, Cys47/Cys67, Cys76/Cys107, Cys89/Cys108, Cys110/Cys134, Cys111/Cys141, Cys124/Cys142, Cys181/Cys191, Cys187/Cys200, Cys202/Cys215, Cys221/Cys234, Cys228/Cys243, Cys249/Cys261, Cys267/Cys280, Cys274/Cys289, Cys295/Cys307, Cys313/Cys326, Cys320/Cys335, Cys342/Cys355, Cys361/Cys374, Cys368/Cys383, Cys385/Cys398, Cys404/Cys416, Cys412/Cys425, Cys427/Cys440, Cys446/Cys455, Cys451/Cys464, Cys466/Cys480, Cys486/Cys499, Cys495/Cys508, Cys510/Cys524, Cys530/Cys543, Cys537/Cys552, and Cys557/Cys578. 3 Anaphylatoxin-like domains span residues 33-74 (CCDK…LEEH), 75-109 (YCSD…KCCY), and 110-142 (CCLL…RACC). N-linked (GlcNAc...) asparagine glycosylation occurs at Asn96. In terms of domain architecture, EGF-like 1 spans 177 to 216 (LHDGCRGGGPCSQQCRDTGSSYVCSCFVGYQLQPDGVNCE). An EGF-like 2; calcium-binding domain is found at 217 to 262 (DINECITGTHSCGIGQTCVNTLGSFRCQRDTSCGTGYELTDDSRCK). One can recognise an EGF-like 3; calcium-binding domain in the interval 263–308 (DIDECETGTHNCPPDFICQNTPGSFRCRPKLQCMNGFIQDALGNCI). The region spanning 309-356 (DINECLSTNMPCPAGQICINTDGSYTCQRISPSCGRGYHLNEDGTRCV) is the EGF-like 4; calcium-binding domain. The region spanning 357–399 (DVDECSSSDQPCGEGHVCINGPGNYRCECKSGYSFDVISRTCI) is the EGF-like 5; calcium-binding domain. The tract at residues 357-441 (DVDECSSSDQ…KLSSDGRSCE (85 aa)) is self-association and FN1-binding. The EGF-like 6; calcium-binding domain occupies 400–441 (DINECRRYPGRLCAHKCENTPGSYYCTCTMGFKLSSDGRSCE). Residues 442–481 (DLNECESSPCSQECANVYGSYQCYCRRGFQLSDIDGISCE) enclose the EGF-like 7; calcium-binding domain. Positions 482–525 (DIDECALPTGGHICSFRCINIPGSFQCTCPSTGYRLAPNARNCQ) constitute an EGF-like 8; calcium-binding domain. Positions 526–579 (DIDECVAETHNCSFNETCFNIQGGFRCLSLECPENYRKSGDTVRLEKTDTIRCI) constitute an EGF-like 9; calcium-binding domain. Asn536 and Asn540 each carry an N-linked (GlcNAc...) asparagine glycan.

It belongs to the fibulin family. In terms of assembly, homomultimerizes and interacts with various extracellular matrix components.

Its subcellular location is the secreted. It localises to the extracellular space. The protein localises to the extracellular matrix. In terms of biological role, incorporated into fibronectin-containing matrix fibers. May play a role in cell adhesion and migration along protein fibers within the extracellular matrix (ECM). Could be important for certain developmental processes and contribute to the supramolecular organization of ECM architecture, in particular to those of basement membranes. In Gallus gallus (Chicken), this protein is Fibulin-1 (FBLN1).